The primary structure comprises 499 residues: Pyruvate kinase 2 (499 aa).

R50 is a substrate binding site. K(+)-binding residues include N52, S54, D84, and T85. ATP is bound at residue 52-55 (NFSH). R91 contributes to the ATP binding site. E241 serves as a coordination point for Mg(2+). Substrate is bound by residues G264, D265, and T297. D265 contacts Mg(2+).

Belongs to the pyruvate kinase family. As to quaternary structure, homotetramer. Requires Mg(2+) as cofactor. The cofactor is K(+).

The catalysed reaction is pyruvate + ATP = phosphoenolpyruvate + ADP + H(+). Its pathway is carbohydrate degradation; glycolysis; pyruvate from D-glyceraldehyde 3-phosphate: step 5/5. With respect to regulation, activated by fructose 2,6-bisphosphate, activated by the effector in a cooperative manner. This chain is Pyruvate kinase 2 (PYK2), found in Trypanosoma brucei brucei.